A 366-amino-acid chain; its full sequence is L-idonate 5-dehydrogenase (366 aa).

7 residues coordinate Zn(2+): Cys56, His81, Cys111, Cys114, Cys117, Cys125, and Glu167.

It belongs to the zinc-containing alcohol dehydrogenase family. The cofactor is Zn(2+).

It catalyses the reaction L-idonate + NAD(+) = 5-dehydro-D-gluconate + NADH + H(+). It functions in the pathway carbohydrate acid metabolism; L-idonate degradation. Functionally, involved in the catabolism of ascorbate to tartrate. The enzyme has no activity with NADP(+). This Vitis vinifera (Grape) protein is L-idonate 5-dehydrogenase.